A 388-amino-acid chain; its full sequence is Chorismate synthase (388 aa).

The NADP(+) site is built by R39 and R45. Residues 130–132, 251–252, G296, 311–315, and R337 each bind FMN; these read RSS, NA, and KPIPT.

It belongs to the chorismate synthase family. As to quaternary structure, homotetramer. Requires FMNH2 as cofactor.

It catalyses the reaction 5-O-(1-carboxyvinyl)-3-phosphoshikimate = chorismate + phosphate. It participates in metabolic intermediate biosynthesis; chorismate biosynthesis; chorismate from D-erythrose 4-phosphate and phosphoenolpyruvate: step 7/7. Functionally, catalyzes the anti-1,4-elimination of the C-3 phosphate and the C-6 proR hydrogen from 5-enolpyruvylshikimate-3-phosphate (EPSP) to yield chorismate, which is the branch point compound that serves as the starting substrate for the three terminal pathways of aromatic amino acid biosynthesis. This reaction introduces a second double bond into the aromatic ring system. The sequence is that of Chorismate synthase from Streptococcus pyogenes serotype M12 (strain MGAS2096).